The primary structure comprises 382 residues: Mannitol-1-phosphate 5-dehydrogenase (382 aa).

3–14 lines the NAD(+) pocket; sequence ALHFGAGNIGRG.

The protein belongs to the mannitol dehydrogenase family.

It catalyses the reaction D-mannitol 1-phosphate + NAD(+) = beta-D-fructose 6-phosphate + NADH + H(+). This is Mannitol-1-phosphate 5-dehydrogenase from Pectobacterium atrosepticum (strain SCRI 1043 / ATCC BAA-672) (Erwinia carotovora subsp. atroseptica).